The primary structure comprises 486 residues: Zinc finger chaperone ZPR1 (486 aa).

The disordered stretch occupies residues 1–31 (MSEQKEDLFKPVGEAAAEVEDESIAEQNKAN). S23 is modified (phosphoserine). 2 consecutive C4-type zinc fingers follow at residues 54–86 (CMNC…CPHC) and 295–327 (CPSC…CDHC). T407 bears the Phosphothreonine mark.

It belongs to the ZPR1 family. Interacts with elongation factor 1-alpha.

It is found in the cytoplasm. The protein resides in the nucleus. Acts as a protein folding chaperone for elongation factor 1-alpha. In Saccharomyces cerevisiae (strain ATCC 204508 / S288c) (Baker's yeast), this protein is Zinc finger chaperone ZPR1.